The chain runs to 497 residues: Iron-sulfur cluster assembly factor IBA57, mitochondrial (497 aa).

The transit peptide at 1-27 directs the protein to the mitochondrion; sequence MFISRRCRIKGFTLKNLLWFRSSSTRF. Positions 414 to 433 are disordered; that stretch reads PTLNPFTNKPPERTKRKQRP.

This sequence belongs to the GcvT family. CAF17/IBA57 subfamily. In terms of assembly, interacts with CCR4, ISA1 and ISA2.

The protein resides in the mitochondrion matrix. Its function is as follows. Required for lysine and glutamate prototrophy and mitochondrial genome maintenance. Has a role in the maturation of mitochondrial aconitase-type and radical-SAM Fe/S proteins biotin synthase and lipoic acid synthase. The chain is Iron-sulfur cluster assembly factor IBA57, mitochondrial from Saccharomyces cerevisiae (strain ATCC 204508 / S288c) (Baker's yeast).